The primary structure comprises 957 residues: Dystrophin-related protein 2 (957 aa).

Spectrin repeat units follow at residues 102–179 and 231–337; these read DHSG…EELE and EHLL…QLQD. The 26-residue stretch at 358-383 folds into the WW domain; it reads WERAISPNKVPYYINHQAQTTCWDHP. The segment at 605–661 adopts a ZZ-type; degenerate zinc-finger fold; it reads KHQTKCSICRQCPIKGFRYRSLKQFNVDICQTCFLTGKASKGNKLHYPIMEYYTPTT. Positions 610, 613, 634, and 637 each coordinate Zn(2+). Ser-748 carries the phosphoserine modification. The span at 877-894 shows a compositional bias: low complexity; the sequence is PPTESDGNGSAGSSLASS. Residues 877–923 form a disordered region; it reads PPTESDGNGSAGSSLASSPRQSEGSHPREKGQTTPDTEAADDVGSKS. Phosphothreonine is present on Thr-910.

As to quaternary structure, interacts with PRX; this enhances phosphorylation. Identified in a dystroglycan complex that contains at least PRX, DRP2, UTRN, DMD and DAG1. In terms of tissue distribution, detected in trigeminal nerve Schwann cells. Detected in brain cortex and hippocampus. Detected in brain membrane fractions and highly enriched in the postsynaptic density (at protein level).

The protein resides in the postsynaptic density. The protein localises to the cell projection. Its subcellular location is the dendrite. It localises to the perikaryon. It is found in the cell membrane. Required for normal myelination and for normal organization of the cytoplasm and the formation of Cajal bands in myelinating Schwann cells. Required for normal PRX location at appositions between the abaxonal surface of the myelin sheath and the Schwann cell plasma membrane. Possibly involved in membrane-cytoskeleton interactions of the central nervous system. The chain is Dystrophin-related protein 2 (Drp2) from Rattus norvegicus (Rat).